We begin with the raw amino-acid sequence, 119 residues long: Hydrogenase maturation factor HypA (119 aa).

His-2 serves as a coordination point for Ni(2+). Zn(2+)-binding residues include Cys-73, Cys-76, Cys-89, and Cys-92.

This sequence belongs to the HypA/HybF family.

Its function is as follows. Involved in the maturation of [NiFe] hydrogenases. Required for nickel insertion into the metal center of the hydrogenase. The chain is Hydrogenase maturation factor HypA from Dehalococcoides mccartyi (strain ATCC BAA-2266 / KCTC 15142 / 195) (Dehalococcoides ethenogenes (strain 195)).